The primary structure comprises 1223 residues: DNA-directed RNA polymerase subunit beta' (1223 aa).

Zn(2+) contacts are provided by cysteine 60, cysteine 62, cysteine 75, and cysteine 78. Mg(2+) is bound by residues aspartate 449, aspartate 451, and aspartate 453. Zn(2+) is bound by residues cysteine 818, cysteine 892, cysteine 899, and cysteine 902.

This sequence belongs to the RNA polymerase beta' chain family. In terms of assembly, the RNAP catalytic core consists of 2 alpha, 1 beta, 1 beta' and 1 omega subunit. When a sigma factor is associated with the core the holoenzyme is formed, which can initiate transcription. It depends on Mg(2+) as a cofactor. Zn(2+) serves as cofactor.

The enzyme catalyses RNA(n) + a ribonucleoside 5'-triphosphate = RNA(n+1) + diphosphate. DNA-dependent RNA polymerase catalyzes the transcription of DNA into RNA using the four ribonucleoside triphosphates as substrates. This chain is DNA-directed RNA polymerase subunit beta', found in Lactobacillus gasseri (strain ATCC 33323 / DSM 20243 / BCRC 14619 / CIP 102991 / JCM 1131 / KCTC 3163 / NCIMB 11718 / NCTC 13722 / AM63).